Reading from the N-terminus, the 125-residue chain is MIHGIGTDIVHIARIRTSLERHGERFAERILAESEREAWRASRDPARFLAKRFAAKEAFGKALGTGVAVPATLHAVAVDHDALGKPLYRYGDGLQTYLDDRRLNAHLSLTDENDYVVAFAVIETR.

Aspartate 8 and glutamate 57 together coordinate Mg(2+).

Belongs to the P-Pant transferase superfamily. AcpS family. Requires Mg(2+) as cofactor.

The protein resides in the cytoplasm. It catalyses the reaction apo-[ACP] + CoA = holo-[ACP] + adenosine 3',5'-bisphosphate + H(+). Functionally, transfers the 4'-phosphopantetheine moiety from coenzyme A to a Ser of acyl-carrier-protein. In Azoarcus sp. (strain BH72), this protein is Holo-[acyl-carrier-protein] synthase.